The sequence spans 138 residues: ATP synthase epsilon chain (138 aa).

It belongs to the ATPase epsilon chain family. F-type ATPases have 2 components, CF(1) - the catalytic core - and CF(0) - the membrane proton channel. CF(1) has five subunits: alpha(3), beta(3), gamma(1), delta(1), epsilon(1). CF(0) has three main subunits: a, b and c.

It is found in the cell inner membrane. Functionally, produces ATP from ADP in the presence of a proton gradient across the membrane. The chain is ATP synthase epsilon chain from Polaromonas naphthalenivorans (strain CJ2).